Here is a 556-residue protein sequence, read N- to C-terminus: Formate--tetrahydrofolate ligase (556 aa).

65–72 contributes to the ATP binding site; sequence TPAGEGKS.

The protein belongs to the formate--tetrahydrofolate ligase family.

The enzyme catalyses (6S)-5,6,7,8-tetrahydrofolate + formate + ATP = (6R)-10-formyltetrahydrofolate + ADP + phosphate. It functions in the pathway one-carbon metabolism; tetrahydrofolate interconversion. The polypeptide is Formate--tetrahydrofolate ligase (Streptococcus thermophilus (strain CNRZ 1066)).